A 694-amino-acid polypeptide reads, in one-letter code: ATP-dependent RNA helicase DHX33 (694 aa).

Residues 78 to 246 (LKELEANDTV…FNCKGMYLEG (169 aa)) form the Helicase ATP-binding domain. Residue 91 to 98 (SETGSGKT) coordinates ATP. Residues 188 to 191 (DEAH) carry the DEAH box motif. The region spanning 270–443 (TLFHIHRTTP…SMVLQLLALD (174 aa)) is the Helicase C-terminal domain.

This sequence belongs to the DEAD box helicase family. DEAH subfamily.

The protein resides in the nucleus. It localises to the nucleolus. It catalyses the reaction ATP + H2O = ADP + phosphate + H(+). Its function is as follows. Part of a translational control module, also containing pths/DDX47 and ais/DDX52, which coordinates germline stem cell differentiation with ribosome biogenesis during oogenesis. This module allows for coregulation of ribosomal proteins and non1/GTPBP4, a p53 repressor, preventing p53 stabilization, cell cycle arrest and loss of stem cell differentiation. In Drosophila melanogaster (Fruit fly), this protein is ATP-dependent RNA helicase DHX33.